The primary structure comprises 319 residues: 4-hydroxy-3-methylbut-2-enyl diphosphate reductase (319 aa).

Cys-18 serves as a coordination point for [4Fe-4S] cluster. The (2E)-4-hydroxy-3-methylbut-2-enyl diphosphate site is built by His-47 and His-81. Dimethylallyl diphosphate-binding residues include His-47 and His-81. Residues His-47 and His-81 each coordinate isopentenyl diphosphate. Cys-103 is a binding site for [4Fe-4S] cluster. A (2E)-4-hydroxy-3-methylbut-2-enyl diphosphate-binding site is contributed by His-131. His-131 is a binding site for dimethylallyl diphosphate. Isopentenyl diphosphate is bound at residue His-131. The active-site Proton donor is the Glu-133. Residue Thr-172 participates in (2E)-4-hydroxy-3-methylbut-2-enyl diphosphate binding. Residue Cys-202 coordinates [4Fe-4S] cluster. (2E)-4-hydroxy-3-methylbut-2-enyl diphosphate contacts are provided by Ser-230, Ser-231, Asn-232, and Ser-275. Dimethylallyl diphosphate-binding residues include Ser-230, Ser-231, Asn-232, and Ser-275. Isopentenyl diphosphate contacts are provided by Ser-230, Ser-231, Asn-232, and Ser-275.

Belongs to the IspH family. Requires [4Fe-4S] cluster as cofactor.

It catalyses the reaction isopentenyl diphosphate + 2 oxidized [2Fe-2S]-[ferredoxin] + H2O = (2E)-4-hydroxy-3-methylbut-2-enyl diphosphate + 2 reduced [2Fe-2S]-[ferredoxin] + 2 H(+). The enzyme catalyses dimethylallyl diphosphate + 2 oxidized [2Fe-2S]-[ferredoxin] + H2O = (2E)-4-hydroxy-3-methylbut-2-enyl diphosphate + 2 reduced [2Fe-2S]-[ferredoxin] + 2 H(+). It functions in the pathway isoprenoid biosynthesis; dimethylallyl diphosphate biosynthesis; dimethylallyl diphosphate from (2E)-4-hydroxy-3-methylbutenyl diphosphate: step 1/1. Its pathway is isoprenoid biosynthesis; isopentenyl diphosphate biosynthesis via DXP pathway; isopentenyl diphosphate from 1-deoxy-D-xylulose 5-phosphate: step 6/6. In terms of biological role, catalyzes the conversion of 1-hydroxy-2-methyl-2-(E)-butenyl 4-diphosphate (HMBPP) into a mixture of isopentenyl diphosphate (IPP) and dimethylallyl diphosphate (DMAPP). Acts in the terminal step of the DOXP/MEP pathway for isoprenoid precursor biosynthesis. The protein is 4-hydroxy-3-methylbut-2-enyl diphosphate reductase of Beijerinckia indica subsp. indica (strain ATCC 9039 / DSM 1715 / NCIMB 8712).